A 276-amino-acid polypeptide reads, in one-letter code: MALPEFSMRQLLEAGVHFGHQTQRWNPRMGEFIYGDRNGIHILDLTQTHPMLEQALQVVRETVAKGGRILFVGTKRQAQKPVADAAERCAQYYMNHRWLGGTLTNWKTVSNSISRLKEIDEKTADGSLEGLTKKERLGMERDQIKLQASLGGIREMGGLPDLIFVIDVNKEDLAIAEAKKLGIPVVAVVDTNCSPDGVDYIIPGNDDAARAIALYCDLISRAALDGMSTQLETAGVDLGALEEGSVEEAIAEEAPAAAEEAPAAEPAAEETPAAEA.

The interval 251–276 is disordered; that stretch reads AEEAPAAAEEAPAAEPAAEETPAAEA. Residues 252 to 276 are compositionally biased toward low complexity; sequence EEAPAAAEEAPAAEPAAEETPAAEA.

Belongs to the universal ribosomal protein uS2 family.

This Jannaschia sp. (strain CCS1) protein is Small ribosomal subunit protein uS2.